Here is a 76-residue protein sequence, read N- to C-terminus: Dermaseptin-SP2 (76 aa).

An N-terminal signal peptide occupies residues 1–22; that stretch reads MAFLKKSLFLVLFLGLVSLSIC. A propeptide spanning residues 23–45 is cleaved from the precursor; the sequence is EEEKRENEDEEEQEDEEQSEEKR. The interval 24 to 44 is disordered; that stretch reads EEKRENEDEEEQEDEEQSEEK. The segment covering 30-41 has biased composition (acidic residues); it reads EDEEEQEDEEQS. Q73 is modified (glutamine amide). Residues 74-76 constitute a propeptide that is removed on maturation; the sequence is GEQ.

Expressed by the skin glands.

Its subcellular location is the secreted. The protein localises to the target cell membrane. In terms of biological role, antimicrobial peptide with activity against Gram-positive and Gram-negative bacteria and fungi. Has been tested against E.coli (MIC=2.68-8 uM), S.aureus (ATCC 25923, MIC=2.68-8 uM), S.aureus (ATCC oxacillin resistant, MIC=2.68 uM), K.pneumoniae (MIC=10.71 uM) and C.albicans (MIC=10.71-32 uM). Probably acts by disturbing membrane functions with its alpha-helical amphipathic structure. May penetrate bacterial membranes, but stay at the mammalian membrane surface. Shows a very weak hemolytic activity. This Agalychnis spurrelli (Gliding leaf frog) protein is Dermaseptin-SP2.